A 1246-amino-acid polypeptide reads, in one-letter code: Zinc finger protein 687a (1246 aa).

The segment covering 24-47 has biased composition (basic and acidic residues); the sequence is KEAIQSDTHGNHNEHSSVVGKERS. A disordered region spans residues 24-387; it reads KEAIQSDTHG…PTLVESASDA (364 aa). 2 stretches are compositionally biased toward polar residues: residues 88 to 111 and 163 to 195; these read GEFS…SSVP and AFTN…FSSK. Residues 287–301 show a composition bias toward low complexity; the sequence is SSTNPTSLTSTNNLP. The segment covering 302-317 has biased composition (basic and acidic residues); that stretch reads VEEKDLEHIIEERDSP. The segment covering 326–338 has biased composition (polar residues); the sequence is QSRTSLPSNSQGA. Composition is skewed to basic and acidic residues over residues 341–350 and 360–375; these read SKQRITREEA and MQEK…EGKS. A C2H2-type 1 zinc finger spans residues 587 to 619; the sequence is YRCLECGDAFALERSLARHYDRRSMRIEVTCNH. The segment at 696 to 719 adopts a C2H2-type 2; degenerate zinc-finger fold; the sequence is HSCPECWSTFKGKQELVAHFQEVE. 3 C2H2-type zinc fingers span residues 817–840, 854–876, and 885–908; these read HKCP…ASQH, YKCV…IDTH, and FKCP…KDTH. The segment at 907–953 is disordered; that stretch reads THRETSNHDGTSTQNSLVKMESSDGEEWGRDEEEDKGKVSDANSAVP. The span at 914–923 shows a compositional bias: polar residues; the sequence is HDGTSTQNSL. Acidic residues predominate over residues 929 to 940; the sequence is SDGEEWGRDEEE. 2 consecutive C2H2-type zinc fingers follow at residues 958–981 and 988–1011; these read WSCS…TEQH and FPCT…RVKH. A C2H2-type 8; degenerate zinc finger spans residues 1018 to 1044; the sequence is FYCQLCTGEKRSFSSKLILEKHIQAQH. Residues 1045-1093 form a disordered region; that stretch reads AGERGTATQSQAVPQFTDGADSSSEHDAGVLGGSSVEPESRLAESTLTR. 2 C2H2-type zinc fingers span residues 1137-1160 and 1210-1232; these read AQCQ…FISH and HICK…FRTH.

The protein belongs to the krueppel C2H2-type zinc-finger protein family. As to expression, widely expressed with highest levels in kidney, spleen and ovary.

It localises to the nucleus. In terms of biological role, may be involved in transcriptional regulation. The chain is Zinc finger protein 687a (znf687a) from Danio rerio (Zebrafish).